Consider the following 570-residue polypeptide: Sulfite reductase [NADPH] hemoprotein beta-component (570 aa).

[4Fe-4S] cluster is bound by residues cysteine 434, cysteine 440, cysteine 479, and cysteine 483. Residue cysteine 483 participates in siroheme binding.

The protein belongs to the nitrite and sulfite reductase 4Fe-4S domain family. In terms of assembly, alpha(8)-beta(8). The alpha component is a flavoprotein, the beta component is a hemoprotein. It depends on siroheme as a cofactor. Requires [4Fe-4S] cluster as cofactor.

It carries out the reaction hydrogen sulfide + 3 NADP(+) + 3 H2O = sulfite + 3 NADPH + 4 H(+). The protein operates within sulfur metabolism; hydrogen sulfide biosynthesis; hydrogen sulfide from sulfite (NADPH route): step 1/1. Its function is as follows. Component of the sulfite reductase complex that catalyzes the 6-electron reduction of sulfite to sulfide. This is one of several activities required for the biosynthesis of L-cysteine from sulfate. This chain is Sulfite reductase [NADPH] hemoprotein beta-component, found in Escherichia coli O6:H1 (strain CFT073 / ATCC 700928 / UPEC).